The sequence spans 692 residues: Elongation factor G (692 aa).

Residues 8 to 282 form the tr-type G domain; the sequence is EKTRNIGIMA…AIVDFLPAPT (275 aa). GTP-binding positions include 17–24, 81–85, and 135–138; these read AHIDAGKT, DTPGH, and NKMD.

This sequence belongs to the TRAFAC class translation factor GTPase superfamily. Classic translation factor GTPase family. EF-G/EF-2 subfamily.

It localises to the cytoplasm. Catalyzes the GTP-dependent ribosomal translocation step during translation elongation. During this step, the ribosome changes from the pre-translocational (PRE) to the post-translocational (POST) state as the newly formed A-site-bound peptidyl-tRNA and P-site-bound deacylated tRNA move to the P and E sites, respectively. Catalyzes the coordinated movement of the two tRNA molecules, the mRNA and conformational changes in the ribosome. The sequence is that of Elongation factor G from Moorella thermoacetica (strain ATCC 39073 / JCM 9320).